Reading from the N-terminus, the 453-residue chain is Ethanolamine ammonia-lyase large subunit (453 aa).

Residues 160 to 162 and Asn193 each bind substrate; that span reads RLQ. Adenosylcob(III)alamin contacts are provided by Pro194 and Gln246. Glu287 is a binding site for substrate. Ser295 provides a ligand contact to adenosylcob(III)alamin. Asp362 contacts substrate. Met401 contacts adenosylcob(III)alamin.

Belongs to the EutB family. The basic unit is a heterodimer which dimerizes to form tetramers. The heterotetramers trimerize; 6 large subunits form a core ring with 6 small subunits projecting outwards. Adenosylcob(III)alamin is required as a cofactor.

The protein resides in the bacterial microcompartment. The catalysed reaction is ethanolamine = acetaldehyde + NH4(+). It participates in amine and polyamine degradation; ethanolamine degradation. Catalyzes the deamination of various vicinal amino-alcohols to oxo compounds. It is spontaneously inactivated by its substrate and reactivated by EutA. May play a role in BMC assembly or maintenance. Its function is as follows. Expression of the eut operon allows this bacteria to use ethanolamine (EA) as a carbon, nitrogen and energy source. It relies on cobalamin (vitamin B12) both as a cofactor for the ethanolamine ammonia-lyase activity and to induce the operon. EA enhances bacterial survival in macrophages in a concentration-dependent manner, suggesting it is an important nutrient during infection. The polypeptide is Ethanolamine ammonia-lyase large subunit (Salmonella typhimurium (strain LT2 / SGSC1412 / ATCC 700720)).